Consider the following 367-residue polypeptide: Aminomethyltransferase (367 aa).

This sequence belongs to the GcvT family. In terms of assembly, the glycine cleavage system is composed of four proteins: P, T, L and H.

It catalyses the reaction N(6)-[(R)-S(8)-aminomethyldihydrolipoyl]-L-lysyl-[protein] + (6S)-5,6,7,8-tetrahydrofolate = N(6)-[(R)-dihydrolipoyl]-L-lysyl-[protein] + (6R)-5,10-methylene-5,6,7,8-tetrahydrofolate + NH4(+). The glycine cleavage system catalyzes the degradation of glycine. The sequence is that of Aminomethyltransferase from Parasynechococcus marenigrum (strain WH8102).